Reading from the N-terminus, the 59-residue chain is UPF0434 protein Sbal_1685 (59 aa).

It belongs to the UPF0434 family.

The protein is UPF0434 protein Sbal_1685 of Shewanella baltica (strain OS155 / ATCC BAA-1091).